The chain runs to 183 residues: Adenine phosphoribosyltransferase (183 aa).

This sequence belongs to the purine/pyrimidine phosphoribosyltransferase family. Homodimer.

It localises to the cytoplasm. The catalysed reaction is AMP + diphosphate = 5-phospho-alpha-D-ribose 1-diphosphate + adenine. The protein operates within purine metabolism; AMP biosynthesis via salvage pathway; AMP from adenine: step 1/1. Functionally, catalyzes a salvage reaction resulting in the formation of AMP, that is energically less costly than de novo synthesis. The polypeptide is Adenine phosphoribosyltransferase (Citrobacter koseri (strain ATCC BAA-895 / CDC 4225-83 / SGSC4696)).